A 217-amino-acid chain; its full sequence is Probable GTP-binding protein EngB (217 aa).

The region spanning 24–207 is the EngB-type G domain; that stretch reads SQPEICFAGR…HELIESWLIP (184 aa). GTP contacts are provided by residues 32–39, 59–63, 81–84, 148–151, and 185–188; these read GRSNAGKS, GRTQH, DLPG, TKCD, and LFSA. Mg(2+) contacts are provided by serine 39 and threonine 61.

The protein belongs to the TRAFAC class TrmE-Era-EngA-EngB-Septin-like GTPase superfamily. EngB GTPase family. Mg(2+) serves as cofactor.

Necessary for normal cell division and for the maintenance of normal septation. This Paraburkholderia phytofirmans (strain DSM 17436 / LMG 22146 / PsJN) (Burkholderia phytofirmans) protein is Probable GTP-binding protein EngB.